The following is a 188-amino-acid chain: UPF0301 protein MCA2336 2 (188 aa).

Belongs to the UPF0301 (AlgH) family.

The protein is UPF0301 protein MCA2336 2 of Methylococcus capsulatus (strain ATCC 33009 / NCIMB 11132 / Bath).